A 266-amino-acid chain; its full sequence is tRNA pseudouridine synthase A (266 aa).

The active-site Nucleophile is the Asp55. Tyr110 provides a ligand contact to substrate.

This sequence belongs to the tRNA pseudouridine synthase TruA family.

The enzyme catalyses uridine(38/39/40) in tRNA = pseudouridine(38/39/40) in tRNA. Functionally, formation of pseudouridine at positions 38, 39 and 40 in the anticodon stem and loop of transfer RNAs. The protein is tRNA pseudouridine synthase A of Thermococcus sibiricus (strain DSM 12597 / MM 739).